Consider the following 287-residue polypeptide: 4-hydroxybenzoate octaprenyltransferase (287 aa).

A run of 8 helical transmembrane segments spans residues 19–39 (IGSL…ADGL), 42–62 (WHVL…GCVI), 95–115 (FFAV…TLTI), 136–156 (YLPQ…AYAA), 166–186 (WLLF…YAMV), 210–230 (IIGL…SQLA), 233–253 (GIYY…QWLI), and 264–284 (AFLN…ASVL).

It belongs to the UbiA prenyltransferase family. It depends on Mg(2+) as a cofactor.

It is found in the cell inner membrane. It catalyses the reaction all-trans-octaprenyl diphosphate + 4-hydroxybenzoate = 4-hydroxy-3-(all-trans-octaprenyl)benzoate + diphosphate. It functions in the pathway cofactor biosynthesis; ubiquinone biosynthesis. In terms of biological role, catalyzes the prenylation of para-hydroxybenzoate (PHB) with an all-trans polyprenyl group. Mediates the second step in the final reaction sequence of ubiquinone-8 (UQ-8) biosynthesis, which is the condensation of the polyisoprenoid side chain with PHB, generating the first membrane-bound Q intermediate 3-octaprenyl-4-hydroxybenzoate. The protein is 4-hydroxybenzoate octaprenyltransferase of Aliivibrio fischeri (strain MJ11) (Vibrio fischeri).